Consider the following 154-residue polypeptide: Ribonuclease H (154 aa).

One can recognise an RNase H type-1 domain in the interval 1–142; that stretch reads MRKQVEIFTD…CDELARAAAG (142 aa). Positions 10, 48, 70, and 134 each coordinate Mg(2+).

Belongs to the RNase H family. Monomer. The cofactor is Mg(2+).

Its subcellular location is the cytoplasm. The enzyme catalyses Endonucleolytic cleavage to 5'-phosphomonoester.. In terms of biological role, endonuclease that specifically degrades the RNA of RNA-DNA hybrids. In Pectobacterium carotovorum subsp. carotovorum (strain PC1), this protein is Ribonuclease H.